The chain runs to 416 residues: Probable protein phosphatase 2C 75 (416 aa).

Disordered regions lie at residues 1 to 20 (MTEI…SPTK) and 32 to 51 (RRQA…DRTD). Positions 108–411 (LYGIVSVMGR…DNISVVVIDL (304 aa)) constitute a PPM-type phosphatase domain. Mn(2+)-binding residues include Asp-149, Gly-150, Asp-337, and Asp-402.

This sequence belongs to the PP2C family. Mg(2+) is required as a cofactor. It depends on Mn(2+) as a cofactor.

It catalyses the reaction O-phospho-L-seryl-[protein] + H2O = L-seryl-[protein] + phosphate. It carries out the reaction O-phospho-L-threonyl-[protein] + H2O = L-threonyl-[protein] + phosphate. Negative regulator of abscisic acid (ABA) responses during seed germination. In Arabidopsis thaliana (Mouse-ear cress), this protein is Probable protein phosphatase 2C 75 (AHG1).